The sequence spans 119 residues: Large ribosomal subunit protein bL20 (119 aa).

It belongs to the bacterial ribosomal protein bL20 family.

Its function is as follows. Binds directly to 23S ribosomal RNA and is necessary for the in vitro assembly process of the 50S ribosomal subunit. It is not involved in the protein synthesizing functions of that subunit. In Alcanivorax borkumensis (strain ATCC 700651 / DSM 11573 / NCIMB 13689 / SK2), this protein is Large ribosomal subunit protein bL20.